Reading from the N-terminus, the 2754-residue chain is Neurobeachin-like protein 2 (2754 aa).

2 disordered regions span residues 1298-1338 and 1364-1438; these read TAGS…SEAP and SVGS…QQTS. 2 stretches are compositionally biased toward pro residues: residues 1301-1323 and 1388-1400; these read SPPPSSPESPTSPKPAPPKPPTE and TPSPLDGPRPFPA. Residues 1425-1437 are compositionally biased toward polar residues; the sequence is GDDTSNTSNPQQT. Position 1647 is a phosphoserine (serine 1647). Threonine 1867 carries the post-translational modification Phosphothreonine. The region spanning 1915-2040 is the BEACH-type PH domain; that stretch reads EQREKLVLSA…VRNQVYSWLL (126 aa). One can recognise a BEACH domain in the interval 2053–2345; it reads RSPQEMLRAS…QLLKEPHPTR (293 aa). 7 WD repeats span residues 2386-2424, 2448-2491, 2494-2531, 2544-2582, 2589-2631, 2639-2674, and 2682-2717; these read LVLALVPHRQPHSFITQGSPDLLVTVSASGLLGTHSWLP, RLLS…ALPR, LLSQLSCHLDVVTCLALDTCGIYLISGSRDTTCMVWRL, KPVQVLYGHGAAVSCVAISTELDMAVSGSEDGTVIIHTV, AALR…TYSL, KLRASLPLAEQPTALTVTEDFVLLGTAQCALHILQL, and PPLPMKVAIRSVAVTKERSHVLVGLEDGKLIVVVAG. Serine 2739 and serine 2742 each carry phosphoserine.

This sequence belongs to the WD repeat neurobeachin family. In terms of tissue distribution, expressed in megakaryocytes.

Its subcellular location is the endoplasmic reticulum. In terms of biological role, probably involved in thrombopoiesis. Plays a role in the development or secretion of alpha-granules, that contain several growth factors important for platelet biogenesis. The sequence is that of Neurobeachin-like protein 2 (NBEAL2) from Homo sapiens (Human).